Here is a 302-residue protein sequence, read N- to C-terminus: Tegument protein VP22 (302 aa).

The segment covering methionine 1–cysteine 10 has biased composition (basic and acidic residues). Disordered regions lie at residues methionine 1–serine 42 and serine 125–cysteine 170. The tract at residues arginine 154–alanine 244 is interaction with gE. Positions serine 157–cysteine 170 are enriched in polar residues. A Nuclear export signal motif is present at residues leucine 212–threonine 224. Residues glycine 243–lysine 302 form a disordered region.

It belongs to the alphaherpesvirinae VP22 tegument protein family. Interacts with gE (via C-terminus); this interaction is necessary for the recruitment of VP22/ORF9 to the Golgi and its packaging into virions. Interacts with gM (via C-terminus). Interacts with VP16/ORF10; this interaction allows the formation of a tripartite complex composed of VP16/ORF10, VP22/ORF9 and VHS/ORF17. Interacts with the capsid-binding protein ORF44. Interacts with host CGAS. Post-translationally, highly phosphorylated in the host cell. Packaging is selective for underphosphorylated forms.

It is found in the virion tegument. It localises to the host cytoplasm. The protein localises to the host nucleus. The protein resides in the host Golgi apparatus. Functionally, tegument protein that plays different roles during the time course of infection. Participates in both the accumulation of viral mRNAs and viral protein translation at late time of infection. Modulates the RNase activity of the virion host shutoff protein ORF17 probably to ensure necessary levels of key cellular mRNAs and proteins. Plays a role in microtubule reorganization that occurs after viral infection by stabilizing microtubule network. Plays a role in the inhibition of host innate immune system by targeting the CGAS enzymatic activity which is the principal cytosolic DNA sensor that detects invading viral DNA. Acts by mediating disruption of liquid-like droplets in which CGAS is activated, thereby preventing CGAS activity. The chain is Tegument protein VP22 from Homo sapiens (Human).